Consider the following 280-residue polypeptide: uncharacterized protein (280 aa).

A signal peptide spans Met-1–Ala-26.

To E.coli YibQ.

This is an uncharacterized protein from Haemophilus influenzae (strain ATCC 51907 / DSM 11121 / KW20 / Rd).